Reading from the N-terminus, the 277-residue chain is NLP effector protein Pc109174 (277 aa).

An N-terminal signal peptide occupies residues 1–19; that stretch reads MNLVPALVLLLALAQTVLG. A Hepta-peptide GHRHDWE motif motif is present at residues 119–125; the sequence is KSRHLWA. N-linked (GlcNAc...) asparagine glycosylation is present at N199.

The protein belongs to the Necrosis inducing protein (NPP1) family.

The protein localises to the secreted. Functionally, secreted effector that contributes strongly to virulence during infection by P.capsici. Induces cell death in the Solanaceae, including hot pepper. The protein is NLP effector protein Pc109174 of Phytophthora capsici.